The following is a 180-amino-acid chain: Cytochrome c oxidase assembly protein CtaG (180 aa).

Residues 1–8 (MSKKSNKS) are Cytoplasmic-facing. A helical; Signal-anchor for type II membrane protein membrane pass occupies residues 9-29 (LAFSLLGLIVSMVLLSFAAVP). The Periplasmic portion of the chain corresponds to 30–180 (LYNLFCKVTG…SFFKVRDVKK (151 aa)).

It belongs to the COX11/CtaG family.

The protein localises to the cell inner membrane. Its function is as follows. Exerts its effect at some terminal stage of cytochrome c oxidase synthesis, probably by being involved in the insertion of the copper B into subunit I. This Rickettsia bellii (strain RML369-C) protein is Cytochrome c oxidase assembly protein CtaG.